Reading from the N-terminus, the 337-residue chain is Serpentine receptor class alpha-17 (337 aa).

6 helical membrane-spanning segments follow: residues 28–48, 110–130, 155–175, 197–217, 247–267, and 282–302; these read LNFV…GLAI, ELYF…SLTF, IIQL…VPLV, FRTA…YLSV, CILI…VNYI, and IAPF…VIYF.

This sequence belongs to the nematode receptor-like protein sra family.

The protein localises to the membrane. The polypeptide is Serpentine receptor class alpha-17 (sra-17) (Caenorhabditis elegans).